The chain runs to 549 residues: Hydroxylamine reductase (549 aa).

Residues C5, C8, C17, and C23 each contribute to the [4Fe-4S] cluster site. H243, E267, C311, C403, C431, C456, E491, and K493 together coordinate hybrid [4Fe-2O-2S] cluster. C403 bears the Cysteine persulfide mark.

The protein belongs to the HCP family. The cofactor is [4Fe-4S] cluster. It depends on hybrid [4Fe-2O-2S] cluster as a cofactor.

Its subcellular location is the cytoplasm. It catalyses the reaction A + NH4(+) + H2O = hydroxylamine + AH2 + H(+). In terms of biological role, catalyzes the reduction of hydroxylamine to form NH(3) and H(2)O. This is Hydroxylamine reductase from Desulfitobacterium hafniense (strain DSM 10664 / DCB-2).